We begin with the raw amino-acid sequence, 354 residues long: Phosphate acyltransferase (354 aa).

It belongs to the PlsX family. In terms of assembly, homodimer. Probably interacts with PlsY.

It localises to the cytoplasm. It catalyses the reaction a fatty acyl-[ACP] + phosphate = an acyl phosphate + holo-[ACP]. It participates in lipid metabolism; phospholipid metabolism. In terms of biological role, catalyzes the reversible formation of acyl-phosphate (acyl-PO(4)) from acyl-[acyl-carrier-protein] (acyl-ACP). This enzyme utilizes acyl-ACP as fatty acyl donor, but not acyl-CoA. The sequence is that of Phosphate acyltransferase from Nitrobacter hamburgensis (strain DSM 10229 / NCIMB 13809 / X14).